The following is a 255-amino-acid chain: Ribosomal RNA small subunit methyltransferase A (255 aa).

Residues Asn-11, Leu-13, Gly-38, Glu-59, Asp-83, and Asn-101 each contribute to the S-adenosyl-L-methionine site.

This sequence belongs to the class I-like SAM-binding methyltransferase superfamily. rRNA adenine N(6)-methyltransferase family. RsmA subfamily.

It localises to the cytoplasm. The enzyme catalyses adenosine(1518)/adenosine(1519) in 16S rRNA + 4 S-adenosyl-L-methionine = N(6)-dimethyladenosine(1518)/N(6)-dimethyladenosine(1519) in 16S rRNA + 4 S-adenosyl-L-homocysteine + 4 H(+). Its function is as follows. Specifically dimethylates two adjacent adenosines (A1518 and A1519) in the loop of a conserved hairpin near the 3'-end of 16S rRNA in the 30S particle. May play a critical role in biogenesis of 30S subunits. The protein is Ribosomal RNA small subunit methyltransferase A of Thiobacillus denitrificans (strain ATCC 25259 / T1).